The primary structure comprises 557 residues: MMSHTETSLGAENTRTHNFITQIIDEDLASGKHKSVHTRFPPEPNGYLHIGHAKSICLNFGLAKEYQGLCNLRFDDTNPVKEDVEYVDSIKADVEWLGFKWEGEPRYASDYFDALYGYAVELIKKGLAYVDELSPDEMREYRGTLTEPGKNSPYRDRTIEENLALFEKMKNGEFAEGKASLRAKIDMASPFMVMREPVIYRIKFSSHHQTGDKWCIYPMYDFTHCISDAIERITHSICTLEFQDNRRLYDWVLENISIERPLPHQYEFSRLNLEGTLTSKRKLLKLVNDEIVDGWNDPRMPTISGLRRRGYTPASLREFCRRIGVTKQDNVVEYSALEACIREDLNENAPRAMAVIDPVRVVIENFESEAVLTAPNHPNRPELGERQLPFTKELYIDRADFREEANKQYKRLVLGKEVRLRNAYVIKAERVEKDANGEITTIFCTYDPETLGKNPADGRKVKGVIHWVSAVNNHPAEFRLYDRLFTVPNPGAEDDIESVLNPNSLVIKQGFVEQSLANAEAEKGYQFEREGYFCADSKDSRPEHLVFNLTVSLKEGF.

The 'HIGH' region signature appears at 42-52 (PEPNGYLHIGH). Residues 43–45 (EPN) and 49–55 (HIGHAKS) contribute to the ATP site. Asp75 and Tyr220 together coordinate L-glutamine. Residues Thr239 and 270-271 (RL) contribute to the ATP site. Residues 277-281 (LTSKR) carry the 'KMSKS' region motif.

This sequence belongs to the class-I aminoacyl-tRNA synthetase family. In terms of assembly, monomer.

It is found in the cytoplasm. It carries out the reaction tRNA(Gln) + L-glutamine + ATP = L-glutaminyl-tRNA(Gln) + AMP + diphosphate. The protein is Glutamine--tRNA ligase of Haemophilus influenzae (strain ATCC 51907 / DSM 11121 / KW20 / Rd).